The sequence spans 4138 residues: Fumosorinone synthetase (4138 aa).

Positions 15 to 455 (PEPIAIVGSA…GTNAHAIIER (441 aa)) constitute a Ketosynthase family 3 (KS3) domain. Residues Cys189, His328, and His375 each act as for beta-ketoacyl synthase activity in the active site. Residues 590–921 (VFTGQGAQWP…APDAVSFSTA (332 aa)) form a malonyl-CoA:ACP transacylase (MAT) domain region. Positions 990-1133 (HELLGRRAVD…GLIDVHLGPR (144 aa)) are N-terminal hotdog fold. The segment at 990-1306 (HELLGRRAVD…GFEVRSVGER (317 aa)) is dehydratase (DH) domain. Residues 990–1309 (HELLGRRAVD…VRSVGERDAA (320 aa)) enclose the PKS/mFAS DH domain. The active-site Proton acceptor; for dehydratase activity is the His1022. Positions 1157–1309 (LQEIDCEKLY…VRSVGERDAA (153 aa)) are C-terminal hotdog fold. The Proton donor; for dehydratase activity role is filled by Asp1216. Residues 1456–1650 (RFYAEDKGMQ…FSGADHVAHD (195 aa)) form a methyltransferase (MT) domain region. The ketoreductase (KR) domain stretch occupies residues 2205–2379 (TYLMVGAAGG…AASIIHVGFV (175 aa)). A Carrier 1 domain is found at 2507–2587 (EAAAAVRRAF…QLSTLAAKLA (81 aa)). Ser2547 carries the post-translational modification O-(pantetheine 4'-phosphoryl)serine. Residues 2587–2683 (ARQQSPRKEG…TEPKTEDKVS (97 aa)) form a disordered region. Residues 2610–2621 (TQDKLVDDKEQK) show a composition bias toward basic and acidic residues. The segment covering 2622-2643 (VQVTSSLAKADSLTQEMQASAH) has biased composition (polar residues). Over residues 2647 to 2659 (DSATNPTPSSTAS) the composition is skewed to low complexity. The span at 2664 to 2675 (SNSQSTRSTSTE) shows a compositional bias: polar residues. A condensation (C) domain region spans residues 2701–3128 (REAPMSAAQA…ASQRVRECAV (428 aa)). Residues 3162 to 3564 (CQKNSARTAI…DGTLLCFGRI (403 aa)) are adenylation (A) (KR) domain. The Carrier 2 domain maps to 3680–3759 (EKMTIQEGEL…GMTRCVLAQR (80 aa)). Ser3719 carries the post-translational modification O-(pantetheine 4'-phosphoryl)serine. The segment at 3813-4045 (LTGATGFLGG…LDFGTVDAVV (233 aa)) is reductase (RED) domain.

It in the C-terminal section; belongs to the NRP synthetase family.

Its function is as follows. Hybrid PKS-NRPS synthetase; part of the gene cluster that mediates the biosynthesis of fumosorinone, a 2-pyridone alkaloid that acts as an inhibitor of protein tyrosine phosphatase 1B which is implicated asa negative regulator of insulin receptor signaling and a potential drug target for the treatment of type II diabetes and other associated metabolic syndromes. The polyketide-amino acid backbone of fumosorinone is first assembled by the PKS-NRPS hybrid fumoS. The PKS modules condense one acetyl-CoA starter unit with 7 malonyl-CoA units, programmed C-methylations occurring after the first 3 and the sixth extensions, and cycles of full reduction occurring after the first 2 extensions. Because fumoS lacks a designated enoyl reductase (ER) domain, the required activity is provided the enoyl reductase fumoC. Upon formation of the polyketide backbone on the thiotemplate, the polyketide is transferred to the NRPS module and linked to tyrosine to produce the acyltetramic acid intermediate called prefumosorinone A. The cytochrome P450 monooxygenase fumoA then probably catalyzes an unprecedented oxidative ring expansion of prefumosorinone A to form prefumosorinone B which contains the 2-pyridone core of fumosorinone. The cytochrome P450 monooxygenase fumoB might hydroxylate the nitrogen of prefumosorinone B, but not the acyltetramic acid prefumosorinone A, to form fumosorinone. The sequence is that of Fumosorinone synthetase from Cordyceps fumosorosea (strain ARSEF 2679) (Isaria fumosorosea).